The chain runs to 542 residues: Hydroxylamine reductase (542 aa).

The [4Fe-4S] cluster site is built by Cys5, Cys8, Cys17, and Cys23. Hybrid [4Fe-2O-2S] cluster is bound by residues His237, Glu261, Cys305, Cys397, Cys425, Cys450, Glu485, and Lys487. The residue at position 397 (Cys397) is a Cysteine persulfide.

This sequence belongs to the HCP family. It depends on [4Fe-4S] cluster as a cofactor. Requires hybrid [4Fe-2O-2S] cluster as cofactor.

It is found in the cytoplasm. It carries out the reaction A + NH4(+) + H2O = hydroxylamine + AH2 + H(+). Functionally, catalyzes the reduction of hydroxylamine to form NH(3) and H(2)O. The polypeptide is Hydroxylamine reductase (Acetivibrio thermocellus (strain ATCC 27405 / DSM 1237 / JCM 9322 / NBRC 103400 / NCIMB 10682 / NRRL B-4536 / VPI 7372) (Clostridium thermocellum)).